Consider the following 608-residue polypeptide: Afamin (608 aa).

An N-terminal signal peptide occupies residues methionine 1–alanine 21. Albumin domains follow at residues leucine 22–threonine 210, glutamine 211–glutamate 403, and threonine 404–aspartate 599. Asparagine 33 carries N-linked (GlcNAc...) asparagine glycosylation. Cystine bridges form between cysteine 77–cysteine 86, cysteine 99–cysteine 114, cysteine 113–cysteine 124, cysteine 148–cysteine 193, cysteine 192–cysteine 201, cysteine 224–cysteine 270, cysteine 269–cysteine 277, cysteine 289–cysteine 303, cysteine 302–cysteine 313, cysteine 340–cysteine 385, and cysteine 384–cysteine 393. The N-linked (GlcNAc...) asparagine glycan is linked to asparagine 109. Residue asparagine 153 is glycosylated (N-linked (GlcNAc...) asparagine). The interval alanine 215–lysine 319 is binding pocket for hydrophobic ligands. Asparagine 402 carries N-linked (GlcNAc...) asparagine glycosylation. Cystine bridges form between cysteine 416–cysteine 462, cysteine 461–cysteine 470, cysteine 483–cysteine 499, cysteine 498–cysteine 509, and cysteine 580–cysteine 589. N-linked (GlcNAc...) asparagine glycosylation occurs at asparagine 488. Residues valine 583–arginine 608 form a disordered region. Basic and acidic residues predominate over residues lysine 596–arginine 608.

It belongs to the ALB/AFP/VDB family. Forms a 1:1 complex with Wnt family members; interacts with WNT1, WNT2B, WNT3, WNT5A, WNT7A, WNT7B, WNT8, WNT9A, WNT9B, WNT10A and WNT10B. Interacts with WNT3A. N-glycosylated; more than 90% of the glycans are sialylated. As to expression, detected in brain, especially on brain capillaries (at protein level). Expressed in isolated brain capillaries.

Its subcellular location is the secreted. Its function is as follows. Functions as a carrier for hydrophobic molecules in body fluids. Essential for the solubility and activity of lipidated Wnt family members, including WNT1, WNT2B, WNT3, WNT3A, WNT5A, WNT7A, WNT7B, WNT8, WNT9A, WNT9B, WNT10A and WNT10B. Binds vitamin E. May transport vitamin E in body fluids under conditions where the lipoprotein system is not sufficient. May be involved in the transport of vitamin E across the blood-brain barrier. This Mus musculus (Mouse) protein is Afamin (Afm).